The chain runs to 286 residues: MVAVIIKGNEVAEKKRAQLKEEVVKLKEQGIVPGLAVILVGEDPASRSYVKGKEKGCEQVGIYSELIEFPETITEERLLTEIDRLNGDDRINGILVQLPLPKHIEEKAIIERISPEKDVDGFHPISVGRMMTGQDTFLPCTPHGIVELVKETNLDISGKHVVVIGRSNIVGKPVGQLFLNENATVTYCHSKTQNMKELTKLADILIVAVGRPKMVTADYIKEGAVVIDVGVNRLETGKLCGDVDFDNVLDVAGYITPVPKGVGPMTITMLLHNTVESAKRAGVVCK.

NADP(+) is bound by residues 165–167 (GRS), Ser190, and Val231.

This sequence belongs to the tetrahydrofolate dehydrogenase/cyclohydrolase family. Homodimer.

It catalyses the reaction (6R)-5,10-methylene-5,6,7,8-tetrahydrofolate + NADP(+) = (6R)-5,10-methenyltetrahydrofolate + NADPH. It carries out the reaction (6R)-5,10-methenyltetrahydrofolate + H2O = (6R)-10-formyltetrahydrofolate + H(+). Its pathway is one-carbon metabolism; tetrahydrofolate interconversion. Functionally, catalyzes the oxidation of 5,10-methylenetetrahydrofolate to 5,10-methenyltetrahydrofolate and then the hydrolysis of 5,10-methenyltetrahydrofolate to 10-formyltetrahydrofolate. This Bacillus cereus (strain ZK / E33L) protein is Bifunctional protein FolD.